We begin with the raw amino-acid sequence, 402 residues long: DNA replication and repair protein RecF (402 aa).

Position 30-37 (30-37 (GYNGIGKT)) interacts with ATP.

It belongs to the RecF family.

The protein localises to the cytoplasm. The RecF protein is involved in DNA metabolism; it is required for DNA replication and normal SOS inducibility. RecF binds preferentially to single-stranded, linear DNA. It also seems to bind ATP. This Pseudarthrobacter chlorophenolicus (strain ATCC 700700 / DSM 12829 / CIP 107037 / JCM 12360 / KCTC 9906 / NCIMB 13794 / A6) (Arthrobacter chlorophenolicus) protein is DNA replication and repair protein RecF.